The chain runs to 138 residues: Large ribosomal subunit protein uL16 (138 aa).

Positions 1-16 are enriched in basic residues; that stretch reads MLIPRRVKHRKQHHPS. The interval 1–25 is disordered; the sequence is MLIPRRVKHRKQHHPSRSGAAKGGT.

This sequence belongs to the universal ribosomal protein uL16 family. As to quaternary structure, part of the 50S ribosomal subunit.

In terms of biological role, binds 23S rRNA and is also seen to make contacts with the A and possibly P site tRNAs. The sequence is that of Large ribosomal subunit protein uL16 from Rhodococcus erythropolis (strain PR4 / NBRC 100887).